The chain runs to 419 residues: Acetyltransferase fsoF (419 aa).

The N-linked (GlcNAc...) asparagine glycan is linked to N2. 2 helical membrane passes run 4-24 (TIIS…VVGF) and 62-82 (AFLG…AILS). Positions 89–114 (QSPTSSLGGLIPPTTRDTPKTQNNAT) are disordered. 2 N-linked (GlcNAc...) asparagine glycosylation sites follow: N112 and N169. A run of 4 helical transmembrane segments spans residues 230 to 250 (YWAI…VVAV), 314 to 334 (YVFM…SDVS), 337 to 357 (IPLG…GIML), and 386 to 406 (VSGP…WIYM).

The protein belongs to the wax synthase family.

The protein resides in the membrane. It catalyses the reaction 3-O-(beta-D-glucopyranosyl)-2alpha-hydroxyisomotiol + acetyl-CoA = 3-O-(beta-D-glucopyranosyl)-2alpha-acetoxyisomotiol + CoA. It carries out the reaction 2-deacetylfuscoatroside + acetyl-CoA = fuscoatroside + CoA. It functions in the pathway secondary metabolite biosynthesis; terpenoid biosynthesis. Its function is as follows. Terpene cyclase-glycosyl transferase fusion protein; part of the gene cluster that mediates the biosynthesis of the enfumafungin-type antibiotic, fuscoatroside. Within the pathway, fsoF catalyzes the acetylation of C2-alpha-OH following the C2 hydroxylation by the cytochrome monooxygenase fsoD. The fuscoatroside biosynthesis is initiated by the cyclization of 2,3(S)-oxidosqualene through FsoA's terpene cyclase (TC) domain, leading to the formation of the fernane skeleton isomotiol, harboring a fernane triterpene skeleton with a C8-C9 double bond. Subsequently, C2-alpha-hydroxylation mediated by fsoD results in the production of 2-alpha-hydroxy-isomotiol, which is further acetylated by fsoF. The glycosyltransferase (GT) domain of FsoA may convert isomotiol, 2-alpha-hydroxy-isomotiol, and the acetylated derivative of 2-alpha-hydroxy-isomotiol into their corresponding glycosides 3-O-(beta-D-glucopyranosyl)-isomotiol, 3-O-(beta-D-glucopyranosyl)-2-alpha-hydroxy-isomotiol, and 3-O-(beta-D-glucopyranosyl)-2-alpha-acetoxy-isomotiol, which then undergo oxidative cleavage under the action of fsoE to form s 2-deacetoxy-fuscoatroside, 2-deacetyl-fuscoatroside, and fuscoatroside, respectively. Although hydroxylation followed by acetylation of 3-O-(beta-D-glucopyranosyl)-isomotiol and 2-deacetoxy-fuscoatroside by fsoD and fsoF could not be ruled out, this process is likely to occur with difficulty due to bulky steric hindrance caused by the presence of a glycan at C3 in these compounds. Interestingly, fsoE can also utilize the aglycones isomotiol and 2-alpha-hydroxy-isomotiol as substrates to generate 19-beta-hydroxy-isomotiol and 2-alpha,19-beta-dihydroxy-isomotiol, respectively. These reactions occur with lower efficiency. Finally, fsoE can further convert 2-alpha,19-beta-dihydroxy-isomotiol into 2-alpha-hydroxy-ismotiol-19-one and 2-alpha-hydroxy-ismotiol-19-one into 2-deacetyl-3-deglucopyranosyl-fuscoatroside. The polypeptide is Acetyltransferase fsoF (Humicola fuscoatra).